A 75-amino-acid polypeptide reads, in one-letter code: Translation initiation factor IF-1 (75 aa).

The S1-like domain maps to 1-75; sequence MANLPKEQKL…SKGRIVYRFK (75 aa).

This sequence belongs to the IF-1 family. In terms of assembly, component of the 30S ribosomal translation pre-initiation complex which assembles on the 30S ribosome in the order IF-2 and IF-3, IF-1 and N-formylmethionyl-tRNA(fMet); mRNA recruitment can occur at any time during PIC assembly.

The protein localises to the cytoplasm. One of the essential components for the initiation of protein synthesis. Stabilizes the binding of IF-2 and IF-3 on the 30S subunit to which N-formylmethionyl-tRNA(fMet) subsequently binds. Helps modulate mRNA selection, yielding the 30S pre-initiation complex (PIC). Upon addition of the 50S ribosomal subunit IF-1, IF-2 and IF-3 are released leaving the mature 70S translation initiation complex. The chain is Translation initiation factor IF-1 from Mesomycoplasma hyopneumoniae (strain 232) (Mycoplasma hyopneumoniae).